We begin with the raw amino-acid sequence, 443 residues long: EP1-like glycoprotein 4 (443 aa).

The signal sequence occupies residues 1 to 22 (MEFSTTLALFFTLSIFLVGAQA). The Bulb-type lectin domain maps to 29–159 (QFRVVNEGGY…NGKFVWQSFD (131 aa)). Residues N66, N102, N258, and N269 are each glycosylated (N-linked (GlcNAc...) asparagine). The stretch at 254–296 (GSQFNVSTFLSRPKHNATLSFLRLESDGNIRVWSYSTLATSTA) is one WD repeat. The 78-residue stretch at 356–433 (CDPKTFHYFK…TSLVAYVKAP (78 aa)) folds into the PAN domain. 2 disulfides stabilise this stretch: C387–C409 and C391–C397. N-linked (GlcNAc...) asparagine glycosylation is present at N434.

The protein resides in the secreted. The protein localises to the cell wall. This chain is EP1-like glycoprotein 4, found in Arabidopsis thaliana (Mouse-ear cress).